The following is a 607-amino-acid chain: Karyogamy meiotic segregation protein 1 (607 aa).

The disordered stretch occupies residues 83–135; it reads DDSFANQAEKPSMEQQNSKNSIKEDANEHSVNSAHSKSSSNASPESLNPSQMM. Low complexity predominate over residues 111-132; it reads HSVNSAHSKSSSNASPESLNPS.

Interacts with mcp1 and sad1.

It localises to the cytoplasm. Its subcellular location is the cytoskeleton. The protein resides in the microtubule organizing center. It is found in the spindle pole body. Has a role in karyogamy, recombination and segregation during meiosis. Although it has been shown to associate with the spindle pole body it is unlikely to be involved in its formation or maintenance. The sequence is that of Karyogamy meiotic segregation protein 1 (kms1) from Schizosaccharomyces pombe (strain 972 / ATCC 24843) (Fission yeast).